Here is a 232-residue protein sequence, read N- to C-terminus: Ubiquinone biosynthesis O-methyltransferase (232 aa).

The S-adenosyl-L-methionine site is built by Arg36, Gly55, Asp76, and Leu120.

The protein belongs to the methyltransferase superfamily. UbiG/COQ3 family.

The enzyme catalyses a 3-demethylubiquinol + S-adenosyl-L-methionine = a ubiquinol + S-adenosyl-L-homocysteine + H(+). It catalyses the reaction a 3-(all-trans-polyprenyl)benzene-1,2-diol + S-adenosyl-L-methionine = a 2-methoxy-6-(all-trans-polyprenyl)phenol + S-adenosyl-L-homocysteine + H(+). It functions in the pathway cofactor biosynthesis; ubiquinone biosynthesis. Functionally, O-methyltransferase that catalyzes the 2 O-methylation steps in the ubiquinone biosynthetic pathway. The chain is Ubiquinone biosynthesis O-methyltransferase from Dechloromonas aromatica (strain RCB).